The sequence spans 702 residues: Elongation factor G (702 aa).

Positions 8 to 290 (HRVRNIGIAA…AVAMYLPAPT (283 aa)) constitute a tr-type G domain. GTP-binding positions include 17 to 24 (AHIDAGKT), 87 to 91 (DTPGH), and 141 to 144 (NKMD).

It belongs to the TRAFAC class translation factor GTPase superfamily. Classic translation factor GTPase family. EF-G/EF-2 subfamily.

The protein resides in the cytoplasm. Functionally, catalyzes the GTP-dependent ribosomal translocation step during translation elongation. During this step, the ribosome changes from the pre-translocational (PRE) to the post-translocational (POST) state as the newly formed A-site-bound peptidyl-tRNA and P-site-bound deacylated tRNA move to the P and E sites, respectively. Catalyzes the coordinated movement of the two tRNA molecules, the mRNA and conformational changes in the ribosome. The chain is Elongation factor G from Aliarcobacter butzleri (strain RM4018) (Arcobacter butzleri).